A 212-amino-acid chain; its full sequence is Orotate phosphoribosyltransferase (212 aa).

Residue lysine 26 participates in 5-phospho-alpha-D-ribose 1-diphosphate binding. Residue 34–35 coordinates orotate; sequence FF. 5-phospho-alpha-D-ribose 1-diphosphate is bound by residues 72–73, arginine 99, lysine 100, lysine 103, histidine 105, and 124–132; these read YK and DDVITVGTA. Residues threonine 128 and arginine 156 each coordinate orotate.

The protein belongs to the purine/pyrimidine phosphoribosyltransferase family. PyrE subfamily. As to quaternary structure, homodimer. Mg(2+) is required as a cofactor.

It catalyses the reaction orotidine 5'-phosphate + diphosphate = orotate + 5-phospho-alpha-D-ribose 1-diphosphate. It functions in the pathway pyrimidine metabolism; UMP biosynthesis via de novo pathway; UMP from orotate: step 1/2. Catalyzes the transfer of a ribosyl phosphate group from 5-phosphoribose 1-diphosphate to orotate, leading to the formation of orotidine monophosphate (OMP). The polypeptide is Orotate phosphoribosyltransferase (Ruthia magnifica subsp. Calyptogena magnifica).